A 215-amino-acid polypeptide reads, in one-letter code: Probable GTP-binding protein EngB (215 aa).

An EngB-type G domain is found at 31-215 (GPPEIAFAGR…RAAILQAIAV (185 aa)). GTP is bound by residues 39-46 (GRSNVGKS), 66-70 (GRTQE), 93-96 (DMPG), 160-163 (TKSD), and 194-196 (TSS). Residues Ser-46 and Thr-68 each coordinate Mg(2+).

This sequence belongs to the TRAFAC class TrmE-Era-EngA-EngB-Septin-like GTPase superfamily. EngB GTPase family. Mg(2+) serves as cofactor.

Its function is as follows. Necessary for normal cell division and for the maintenance of normal septation. The polypeptide is Probable GTP-binding protein EngB (Bartonella quintana (strain Toulouse) (Rochalimaea quintana)).